Here is a 568-residue protein sequence, read N- to C-terminus: WW domain-containing protein A (568 aa).

The 124-residue stretch at 6–129 (PLNNSNGSNS…TGPISHDVVF (124 aa)) folds into the C2 domain. Residues 325–359 (VKLPDGWESRIDPVSGKVFYLNHNNKTTSWISPLE) enclose the WW 1 domain. A disordered region spans residues 376 to 461 (TILDNNNNNN…SRPKKTPATP (86 aa)). Residues 380 to 418 (NNNNNNNNNNNNNNNNNNNNNNINNTNNIQQKQQAQQQP) are compositionally biased toward low complexity. Basic and acidic residues predominate over residues 435-451 (QKEKEKEKEINAEDYKI). The region spanning 519 to 552 (QGLPNGWEVRQDQFGRVFYVDHINRATTWTRPTV) is the WW 2 domain.

In terms of assembly, interacts with calmodulin in the absence of Ca(2+).

It is found in the nucleus. Its subcellular location is the nucleolus. The protein resides in the cytoplasm. It localises to the cell cortex. The protein localises to the cytoskeleton. In terms of biological role, involved in regulation of actin cytoskeleton organization and cytokinesis. The sequence is that of WW domain-containing protein A from Dictyostelium discoideum (Social amoeba).